Reading from the N-terminus, the 586-residue chain is Paxillin (586 aa).

Position 1 is an N-acetylmethionine (methionine 1). An LD motif 1 motif is present at residues 3 to 15 (DLDALLADLESTT). A disordered region spans residues 13–138 (STTSHISKRP…PSPTVMSSSL (126 aa)). Tyrosine 31 carries the phosphotyrosine; by PTK6 modification. Positions 45 to 54 (VPPPVPPPPS) are enriched in pro residues. Residues serine 83 and serine 85 each carry the phosphoserine modification. Over residues 86–98 (PIYSSSTKNSSAS) the composition is skewed to low complexity. At tyrosine 88 the chain carries Phosphotyrosine. Serine 106 is modified (phosphoserine). Position 118 is a phosphotyrosine; by PTK6 (tyrosine 118). 3 positions are modified to phosphoserine: serine 119, serine 126, and serine 130. Polar residues predominate over residues 121 to 137 (PNKQKSAEPSPTVMSSS). Phosphothreonine is present on threonine 132. Phosphoserine is present on residues serine 137, serine 140, and serine 143. The short motif at 144 to 156 (ELDRLLLELNAVQ) is the LD motif 2 element. Position 210 is a phosphotyrosine (tyrosine 210). The disordered stretch occupies residues 220 to 241 (GGKAGPLMKEKPKRNGGRGLED). The short motif at 245 to 257 (SVESLLDELENSV) is the LD motif 3 element. Phosphoserine is present on serine 259. Residues 266 to 290 (VNQGEMSSPQRVTSSQQQTRISASS) form a disordered region. Serine 273 is modified (phosphoserine; by CDK5). 7 positions are modified to phosphoserine: serine 279, serine 287, serine 290, serine 301, serine 317, serine 327, and serine 335. The required for binding to PARVA and ILK stretch occupies residues 291–310 (ATRELDELMASLSDFKFMAQ). The LD motif 4 motif lies at 294–305 (ELDELMASLSDF). A disordered region spans residues 309–329 (AQGKTGSSSPPGGLSKPGSQL). Low complexity predominate over residues 310 to 329 (QGKTGSSSPPGGLSKPGSQL). The short motif at 328 to 340 (QLDSMLGSLQSDL) is the LD motif 5 element. 3 consecutive LIM zinc-binding domains span residues 353–403 (CGAC…CEKD), 412–462 (CYYC…CRKD), and 471–521 (CGGC…CEVH). The residue at position 528 (serine 528) is a Phosphoserine. In terms of domain architecture, LIM zinc-binding 4 spans 530-580 (CSGCQKPITGRCITAMAKKFHPEHFVCAFCLKQLNKGTFKEQNDKPYCQSC).

The protein belongs to the paxillin family. In terms of assembly, interacts in vitro with VCL/vinculin as well as to the SH3 domain of SRC and, when tyrosine phosphorylated, to the SH2 domain of CRK. Interacts with GIT1. Interacts with NUDT16L1/SDOS. Interacts with PTK2/FAK1. Interacts with PTK2B/PYK2. Interacts with ASAP2. Interacts with unphosphorylated ITGA4. Interacts with RNF5. Interacts with PDCD10. Interacts with NEK3, the interaction is prolactin-dependent. Interacts with PTK6. Interacts with TGFB1I1. Interacts with SORBS1. Interacts with PARVB. Interacts (via LD motif 4) with PARVA/PARVIN. Interacts (via LD motif 4) with ILK. Interacts (via cytoplasmic domain) with CEACAM1; the interaction is phosphotyrosyl-dependent. Interacts with LIMA1; this complex stabilizes actin dynamics. Interacts with CD36 (via C-terminus). Interacts with TRIM15. Interacts with PAK4; PAK4 acts as a scaffold to suppport PAXI phosphorylation at Ser-301. Post-translationally, phosphorylated by MAPK1/ERK2. Phosphorylated on tyrosine residues during integrin-mediated cell adhesion, embryonic development, fibroblast transformation and following stimulation of cells by mitogens. Phosphorylation at Ser-273 by CDK5 reduces its interaction with PTK2/FAK1 in matrix-cell focal adhesions (MCFA) during oligodendrocytes (OLs) differentiation. Phosphorylation at Tyr-31 and Tyr-118 by PTK6 promote the activation of RAC1 via CRK/CrKII, thereby promoting migration and invasion. Phosphorylation at Ser-279 by SLK is required for PXN redistribution and cell motility. Phosphorylation at Ser-301 promotes focal adhesion disassembly during cell migration.

Its subcellular location is the cytoplasm. The protein resides in the cytoskeleton. It localises to the cell junction. It is found in the focal adhesion. The protein localises to the cell cortex. In terms of biological role, cytoskeletal protein involved in actin-membrane attachment at sites of cell adhesion to the extracellular matrix (focal adhesion). Recruits other proteins such as TRIM15 to focal adhesion. The chain is Paxillin from Rattus norvegicus (Rat).